A 728-amino-acid polypeptide reads, in one-letter code: Phosphoribosylformylglycinamidine synthase subunit PurL (728 aa).

Histidine 42 is an active-site residue. The ATP site is built by tyrosine 45 and lysine 84. Residue glutamate 86 participates in Mg(2+) binding. Residues 87-90 (SHNH) and arginine 109 contribute to the substrate site. Histidine 88 serves as the catalytic Proton acceptor. Residue aspartate 110 coordinates Mg(2+). Glutamine 237 serves as a coordination point for substrate. Aspartate 265 is a binding site for Mg(2+). 309-311 (ESQ) provides a ligand contact to substrate. Positions 491 and 528 each coordinate ATP. Asparagine 529 is a binding site for Mg(2+). Serine 531 serves as a coordination point for substrate.

This sequence belongs to the FGAMS family. Monomer. Part of the FGAM synthase complex composed of 1 PurL, 1 PurQ and 2 PurS subunits.

The protein resides in the cytoplasm. It carries out the reaction N(2)-formyl-N(1)-(5-phospho-beta-D-ribosyl)glycinamide + L-glutamine + ATP + H2O = 2-formamido-N(1)-(5-O-phospho-beta-D-ribosyl)acetamidine + L-glutamate + ADP + phosphate + H(+). The protein operates within purine metabolism; IMP biosynthesis via de novo pathway; 5-amino-1-(5-phospho-D-ribosyl)imidazole from N(2)-formyl-N(1)-(5-phospho-D-ribosyl)glycinamide: step 1/2. Its function is as follows. Part of the phosphoribosylformylglycinamidine synthase complex involved in the purines biosynthetic pathway. Catalyzes the ATP-dependent conversion of formylglycinamide ribonucleotide (FGAR) and glutamine to yield formylglycinamidine ribonucleotide (FGAM) and glutamate. The FGAM synthase complex is composed of three subunits. PurQ produces an ammonia molecule by converting glutamine to glutamate. PurL transfers the ammonia molecule to FGAR to form FGAM in an ATP-dependent manner. PurS interacts with PurQ and PurL and is thought to assist in the transfer of the ammonia molecule from PurQ to PurL. The chain is Phosphoribosylformylglycinamidine synthase subunit PurL from Campylobacter jejuni subsp. jejuni serotype O:2 (strain ATCC 700819 / NCTC 11168).